The primary structure comprises 143 residues: Transcriptional regulator MraZ (143 aa).

SpoVT-AbrB domains follow at residues 5–47 and 76–119; these read EFQH…TLTE and AVEV…DRKL.

This sequence belongs to the MraZ family. In terms of assembly, forms oligomers.

It is found in the cytoplasm. Its subcellular location is the nucleoid. This is Transcriptional regulator MraZ from Macrococcus caseolyticus (strain JCSC5402) (Macrococcoides caseolyticum).